Reading from the N-terminus, the 1028-residue chain is RNA cytidine acetyltransferase 2 (1028 aa).

Residues 286–295 (GRGKSAALGL) and Arg458 contribute to the ATP site. The region spanning 546–729 (VLLGPVDESQ…FAPFYVSQIP (184 aa)) is the N-acetyltransferase domain. Acetyl-CoA-binding positions include 617–619 (IAV), 624–630 (MKMGYGS), and Lys717. The disordered stretch occupies residues 982–1028 (SGIISVKSTKSENENGFDKSTKKRSSDKRSSSSSKSKSSKKRKSLKE). Residues 990 to 1001 (TKSENENGFDKS) are compositionally biased toward basic and acidic residues. The segment covering 1018 to 1028 (KSSKKRKSLKE) has biased composition (basic residues).

Belongs to the RNA cytidine acetyltransferase family. NAT10 subfamily.

The protein localises to the nucleus. It localises to the nucleolus. The catalysed reaction is a cytidine in 18S rRNA + acetyl-CoA + ATP + H2O = an N(4)-acetylcytidine in 18S rRNA + ADP + phosphate + CoA + H(+). It carries out the reaction a cytidine in tRNA + acetyl-CoA + ATP + H2O = an N(4)-acetylcytidine in tRNA + ADP + phosphate + CoA + H(+). Functionally, RNA cytidine acetyltransferase with specificity toward both 18S rRNA and tRNAs. Catalyzes the formation of N(4)-acetylcytidine (ac4C) in 18S rRNA. Required for early nucleolar cleavages of precursor rRNA at sites A0, A1 and A2 during 18S rRNA synthesis. Catalyzes the formation of ac4C in serine and leucine tRNAs. Requires a tRNA-binding adapter protein for full tRNA acetyltransferase activity but not for 18S rRNA acetylation. The sequence is that of RNA cytidine acetyltransferase 2 from Arabidopsis thaliana (Mouse-ear cress).